The sequence spans 98 residues: NADH-ubiquinone oxidoreductase chain 4L (98 aa).

The next 3 helical transmembrane spans lie at Met-1–Leu-21, Ser-29–Leu-49, and Ile-61–Val-81.

Belongs to the complex I subunit 4L family. Core subunit of respiratory chain NADH dehydrogenase (Complex I) which is composed of 45 different subunits.

The protein resides in the mitochondrion inner membrane. The enzyme catalyses a ubiquinone + NADH + 5 H(+)(in) = a ubiquinol + NAD(+) + 4 H(+)(out). Its function is as follows. Core subunit of the mitochondrial membrane respiratory chain NADH dehydrogenase (Complex I) which catalyzes electron transfer from NADH through the respiratory chain, using ubiquinone as an electron acceptor. Part of the enzyme membrane arm which is embedded in the lipid bilayer and involved in proton translocation. This Rhinolophus monoceros (Formosan lesser horseshoe bat) protein is NADH-ubiquinone oxidoreductase chain 4L (MT-ND4L).